We begin with the raw amino-acid sequence, 98 residues long: Large ribosomal subunit protein bL25 (98 aa).

Positions 1-22 (MANFVLNATARNEDKQGKGASR) are disordered.

This sequence belongs to the bacterial ribosomal protein bL25 family. As to quaternary structure, part of the 50S ribosomal subunit; part of the 5S rRNA/L5/L18/L25 subcomplex. Contacts the 5S rRNA. Binds to the 5S rRNA independently of L5 and L18.

This is one of the proteins that binds to the 5S RNA in the ribosome where it forms part of the central protuberance. The chain is Large ribosomal subunit protein bL25 from Acinetobacter baylyi (strain ATCC 33305 / BD413 / ADP1).